We begin with the raw amino-acid sequence, 132 residues long: Replication enhancer protein (132 aa).

The protein belongs to the geminiviridae replication enhancer protein family. Homooligomer. Interacts with the replication-associated protein (REP). Interacts with host proliferating cell nuclear antigen (PCNA). Interacts with host retinoblastoma-related protein 1 (RBR1), and may thereby deregulate the host cell cycle. Oligomerization and interaction with PCNA are necessary for optimal replication enhancement.

Functionally, increases viral DNA accumulation. Enhances infectivity and symptom expression. The protein is Replication enhancer protein of Pepper huasteco yellow vein virus (PHYVV).